The following is a 521-amino-acid chain: Amidase 1 (521 aa).

Residues Lys112 and Ser187 each act as charge relay system in the active site. Substrate-binding positions include Ser187 and 208-211 (IGGS). The Acyl-ester intermediate role is filled by Ser211.

It belongs to the amidase family.

It catalyses the reaction a monocarboxylic acid amide + H2O = a monocarboxylate + NH4(+). It functions in the pathway xenobiotic degradation. In terms of biological role, amidase; part of the Fusarium detoxification of benzoxazolinone cluster 1 (FDB1) involved in the degradation of benzoxazolinones produced by the host plant. Maize, wheat, and rye produce the 2 benzoxazinone phytoanticipins 2,4-dihy-droxy-7-methoxy-1,4-benzoxazin-3-one (DIMBOA) and 2,4-dihydroxy-1,4-benzoxazin-3-one (DIBOA) that, due to their inherent instability once released, spontaneously degrade to the more stable corresponding benzoxazolinones, 6-methoxy-2-benzoxazolinone (MBOA) and 2-benzoxazolinone (BOA), respectively. The first step in the detoxification of benzoxazolinones involves the hydrolysis of the cyclic ester bond of benzoxazolinones by the FDB1 cluster gamma-lactamase MBL1 to aminophenols. MBL1 is able to convert BOA into 2-aminophenol (2-AP), as well as MBOA into 5-methoxy-2-aminophenol (2-AMP). The FDB2 cluster N-malonyltransferase FDB2/NAT1 then metabolizes aminophenols via N-malonylation to non-toxic malonamic acids. FDB2/NAT1 converts 2-AP into N-(2-hydroxyphenyl) malonamic acid (HPMA) and 2-AMP into N-(2-hydroxy-4-methoxyphenyl) malonamic acid (HMPMA). The duplicated dienlactone hydrolases DLH1 and DLH2 may provide redundant function for hydrolyzing the lactone moiety in the BOA molecule. The roles of the amidases an other enzymes encoded by the 2 FDB clusters have not been identified so far. This Gibberella moniliformis (strain M3125 / FGSC 7600) (Maize ear and stalk rot fungus) protein is Amidase 1.